The sequence spans 349 residues: ATPase GET3 (349 aa).

Lys-26–Thr-33 is a binding site for ATP. The active site involves Asp-57. ATP contacts are provided by Glu-240 and Asn-267. Residues Cys-280 and Cys-283 each contribute to the Zn(2+) site.

It belongs to the arsA ATPase family. Homodimer. Component of the Golgi to ER traffic (GET) complex, which is composed of GET1, GET2 and GET3. Within the complex, GET1 and GET2 form a heterotetramer which is stabilized by phosphatidylinositol binding and which binds to the GET3 homodimer. Interacts with the chloride channel protein GEF1.

It localises to the cytoplasm. Its subcellular location is the endoplasmic reticulum. The protein localises to the golgi apparatus. Functionally, ATPase required for the post-translational delivery of tail-anchored (TA) proteins to the endoplasmic reticulum. Recognizes and selectively binds the transmembrane domain of TA proteins in the cytosol. This complex then targets to the endoplasmic reticulum by membrane-bound receptors GET1 and GET2, where the tail-anchored protein is released for insertion. This process is regulated by ATP binding and hydrolysis. ATP binding drives the homodimer towards the closed dimer state, facilitating recognition of newly synthesized TA membrane proteins. ATP hydrolysis is required for insertion. Subsequently, the homodimer reverts towards the open dimer state, lowering its affinity for the GET1-GET2 receptor, and returning it to the cytosol to initiate a new round of targeting. Cooperates with the HDEL receptor ERD2 to mediate the ATP-dependent retrieval of resident ER proteins that contain a C-terminal H-D-E-L retention signal from the Golgi to the ER. Involved in low-level resistance to the oxyanions arsenite and arsenate, and in heat tolerance. The polypeptide is ATPase GET3 (Lachancea thermotolerans (strain ATCC 56472 / CBS 6340 / NRRL Y-8284) (Yeast)).